We begin with the raw amino-acid sequence, 96 residues long: Citrate lyase acyl carrier protein (96 aa).

Ser14 carries the post-translational modification O-(phosphoribosyl dephospho-coenzyme A)serine.

It belongs to the CitD family. As to quaternary structure, oligomer with a subunit composition of (alpha,beta,gamma)6.

It is found in the cytoplasm. Its function is as follows. Covalent carrier of the coenzyme of citrate lyase. The protein is Citrate lyase acyl carrier protein of Pectobacterium carotovorum subsp. carotovorum (strain PC1).